We begin with the raw amino-acid sequence, 81 residues long: Cysteine-rich and transmembrane domain-containing protein PCC1 (81 aa).

Residues 1 to 22 show a composition bias toward polar residues; sequence MNQSAQNYFSVQKPSETSSGPY. The interval 1–34 is disordered; the sequence is MNQSAQNYFSVQKPSETSSGPYTSPPPIGYPTRD. A helical transmembrane segment spans residues 56–74; that stretch reads AIMSCFSTCMECIFCCGVC.

Belongs to the CYSTM1 family. Expressed at very low levels in seedlings and petioles, and at higher levels in leaves. Also present in phloem sap.

The protein resides in the cell membrane. Modulates resistance against pathogens including oomycetes (e.g. Hyaloperonospora parasitica and Phytophthora brassicae) and fungi (e.g. Phytophthora brassicae). Controls the abscisic acid-mediated (ABA) signaling pathways. Regulator of the flowering time in response to stress (e.g. UV-C). Regulates polar lipid content; promotes phosphatidylinositol (PI) and 18:0 but prevents 18:2 and 18:3 polar lipids accumulation. This chain is Cysteine-rich and transmembrane domain-containing protein PCC1 (PCC1), found in Arabidopsis thaliana (Mouse-ear cress).